We begin with the raw amino-acid sequence, 181 residues long: uncharacterized protein (181 aa).

Residues 151–181 form a disordered region; it reads AQKKKDFQEPENKHEQLTSTKAPCQENWSDF. Positions 154-166 are enriched in basic and acidic residues; that stretch reads KKDFQEPENKHEQ. Residues 167 to 181 are compositionally biased toward polar residues; that stretch reads LTSTKAPCQENWSDF.

This is an uncharacterized protein from Caenorhabditis elegans.